Consider the following 150-residue polypeptide: Transcription antitermination protein NusB (150 aa).

This sequence belongs to the NusB family.

Involved in transcription antitermination. Required for transcription of ribosomal RNA (rRNA) genes. Binds specifically to the boxA antiterminator sequence of the ribosomal RNA (rrn) operons. The protein is Transcription antitermination protein NusB of Streptococcus equi subsp. zooepidemicus (strain H70).